The chain runs to 284 residues: D-tagatose-1,6-bisphosphate aldolase subunit GatY (284 aa).

The Proton donor role is filled by D82. Positions 83 and 180 each coordinate Zn(2+). G181 lines the dihydroxyacetone phosphate pocket. H208 is a binding site for Zn(2+). Residues 209–211 (GAS) and 230–233 (NVAT) each bind dihydroxyacetone phosphate.

Belongs to the class II fructose-bisphosphate aldolase family. TagBP aldolase GatY subfamily. In terms of assembly, forms a complex with GatZ. It depends on Zn(2+) as a cofactor.

It catalyses the reaction D-tagatofuranose 1,6-bisphosphate = D-glyceraldehyde 3-phosphate + dihydroxyacetone phosphate. It functions in the pathway carbohydrate metabolism; D-tagatose 6-phosphate degradation; D-glyceraldehyde 3-phosphate and glycerone phosphate from D-tagatose 6-phosphate: step 2/2. Catalytic subunit of the tagatose-1,6-bisphosphate aldolase GatYZ, which catalyzes the reversible aldol condensation of dihydroxyacetone phosphate (DHAP or glycerone-phosphate) with glyceraldehyde 3-phosphate (G3P) to produce tagatose 1,6-bisphosphate (TBP). Requires GatZ subunit for full activity and stability. Is involved in the catabolism of galactitol. In Shigella flexneri serotype 5b (strain 8401), this protein is D-tagatose-1,6-bisphosphate aldolase subunit GatY.